A 1128-amino-acid polypeptide reads, in one-letter code: Large proline-rich protein BAG6 (1128 aa).

An N-acetylmethionine modification is found at Met1. One can recognise a Ubiquitin-like domain in the interval 17–92; that stretch reads LEVLVKTLDS…HLVERAPPQT (76 aa). 5 disordered regions span residues 87–126, 185–267, 380–435, 456–523, and 555–598; these read RAPPQTQLPSGASSGTGSASATHGGGPPPGTRGPGASVHD, CRGG…NHPS, VTMT…AASH, IQDS…ALPG, and PGMA…SASD. A compositionally biased stretch (low complexity) spans 95–108; sequence PSGASSGTGSASAT. The residue at position 96 (Ser96) is a Phosphoserine. Thr117 bears the Phosphothreonine mark. Residues 189–201 show a composition bias toward polar residues; that stretch reads SQAQHSQPPSQMP. Repeat 1 spans residues 236-265; it reads RASAQSPGLSPSGPAPAGPTPAPETNAPNH. The segment at 236-630 is 4 X 29 AA approximate repeats; sequence RASAQSPGLS…MTSPTITVAM (395 aa). Over residues 238 to 247 the composition is skewed to low complexity; that stretch reads SAQSPGLSPS. 2 stretches are compositionally biased toward pro residues: residues 248–257 and 388–402; these read GPAPAGPTPA and RPPPTPNAEAPPPGP. Positions 403-412 are enriched in low complexity; it reads GQASSLAPSS. The stretch at 410–438 is repeat 2; that stretch reads PSSTTVESSTEGAPPPGPAPPPAASHPRV. 2 stretches are compositionally biased toward pro residues: residues 422 to 433 and 502 to 515; these read APPPGPAPPPAA and PTPPQSRPSHPGGP. The span at 564 to 581 shows a compositional bias: low complexity; the sequence is ATASASAGTTNTATTAGP. 2 repeat units span residues 569-596 and 602-630. The span at 583 to 594 shows a compositional bias: pro residues; it reads PGGPAQPPPPQP. Disordered regions lie at residues 648–689 and 939–1128; these read QTAA…GLGP and VGDP…AEDP. The segment covering 652–677 has biased composition (pro residues); that stretch reads PPAPPPPPPPPPPAPEQQTAPPPGSP. The segment covering 678 to 688 has biased composition (gly residues); the sequence is PGGAGSPGGLG. 2 positions are modified to phosphoserine: Ser960 and Ser969. A compositionally biased stretch (low complexity) spans 999–1016; the sequence is AAAETEPWAAAVPPEWVP. The interval 1006–1036 is required for interaction with GET4; it reads WAAAVPPEWVPIIQQDIQSQRKVKPQPPLSD. The Nuclear localization site signature appears at 1008 to 1050; sequence AAVPPEWVPIIQQDIQSQRKVKPQPPLSDAYLSGMPAKRRKTM. Residues 1018–1128 are sufficient for the delivery of client proteins to the endoplasmic reticulum; sequence IQQDIQSQRK…NAHRAFAEDP (111 aa). Thr1049 is modified (phosphothreonine). The segment at 1054–1111 is BAG-similar domain, required and sufficient for interaction with UBL4A; that stretch reads GPQLLLSEAVSRAAKAAGARPLTSPESLSRDLEAPEVQESYRQQLRADIQKRLQEDPN. A compositionally biased stretch (low complexity) spans 1062–1072; sequence AVSRAAKAAGA. Phosphoserine occurs at positions 1077 and 1113.

As to quaternary structure, component of the BAG6/BAT3 complex, also named BAT3 complex, at least composed of BAG6, UBL4A and GET4/TRC35. Interacts with GET4; the interaction is direct and localizes BAG6 in the cytosol. Interacts with UBL4A; the interaction is direct and required for UBL4A protein stability. Interacts with AIFM1. Interacts with HSPA2. Interacts with CTCFL. Interacts with p300/EP300. Interacts (via ubiquitin-like domain) with RNF126; required for BAG6-dependent ubiquitination of proteins mislocalized to the cytosol. Interacts (via ubiquitin-like domain) with SGTA; SGTA competes with RNF126 by binding the same region of BAG6, thereby promoting deubiquitination of BAG6-target proteins and rescuing them from degradation. Interacts with ricin A chain. Interacts with VCP and AMFR; both form the VCP/p97-AMFR/gp78 complex. Interacts with SYVN1. Interacts with USP13; the interaction is direct and may mediate UBL4A deubiquitination. Interacts with ZFAND2B. Interacts with KPNA2. Interacts with UBQLN4. Ricin can induce a cleavage by the caspase CASP3. The released C-terminal peptide induces apoptosis.

Its subcellular location is the cytoplasm. The protein resides in the cytosol. The protein localises to the nucleus. It is found in the secreted. It localises to the extracellular exosome. Its function is as follows. ATP-independent molecular chaperone preventing the aggregation of misfolded and hydrophobic patches-containing proteins. Functions as part of a cytosolic protein quality control complex, the BAG6/BAT3 complex, which maintains these client proteins in a soluble state and participates in their proper delivery to the endoplasmic reticulum or alternatively can promote their sorting to the proteasome where they undergo degradation. The BAG6/BAT3 complex is involved in the post-translational delivery of tail-anchored/type II transmembrane proteins to the endoplasmic reticulum membrane. Recruited to ribosomes, it interacts with the transmembrane region of newly synthesized tail-anchored proteins and together with SGTA and ASNA1 mediates their delivery to the endoplasmic reticulum. Client proteins that cannot be properly delivered to the endoplasmic reticulum are ubiquitinated by RNF126, an E3 ubiquitin-protein ligase associated with BAG6 and are sorted to the proteasome. SGTA which prevents the recruitment of RNF126 to BAG6 may negatively regulate the ubiquitination and the proteasomal degradation of client proteins. Similarly, the BAG6/BAT3 complex also functions as a sorting platform for proteins of the secretory pathway that are mislocalized to the cytosol either delivering them to the proteasome for degradation or to the endoplasmic reticulum. The BAG6/BAT3 complex also plays a role in the endoplasmic reticulum-associated degradation (ERAD), a quality control mechanism that eliminates unwanted proteins of the endoplasmic reticulum through their retrotranslocation to the cytosol and their targeting to the proteasome. It maintains these retrotranslocated proteins in an unfolded yet soluble state condition in the cytosol to ensure their proper delivery to the proteasome. BAG6 is also required for selective ubiquitin-mediated degradation of defective nascent chain polypeptides by the proteasome. In this context, it may participate in the production of antigenic peptides and play a role in antigen presentation in immune response. BAG6 is also involved in endoplasmic reticulum stress-induced pre-emptive quality control, a mechanism that selectively attenuates the translocation of newly synthesized proteins into the endoplasmic reticulum and reroutes them to the cytosol for proteasomal degradation. BAG6 may ensure the proper degradation of these proteins and thereby protects the endoplasmic reticulum from protein overload upon stress. By inhibiting the polyubiquitination and subsequent proteasomal degradation of HSPA2 it may also play a role in the assembly of the synaptonemal complex during spermatogenesis. Also positively regulates apoptosis by interacting with and stabilizing the proapoptotic factor AIFM1. By controlling the steady-state expression of the IGF1R receptor, indirectly regulates the insulin-like growth factor receptor signaling pathway. Functionally, involved in DNA damage-induced apoptosis: following DNA damage, accumulates in the nucleus and forms a complex with p300/EP300, enhancing p300/EP300-mediated p53/TP53 acetylation leading to increase p53/TP53 transcriptional activity. When nuclear, may also act as a component of some chromatin regulator complex that regulates histone 3 'Lys-4' dimethylation (H3K4me2). Released extracellularly via exosomes, it is a ligand of the natural killer/NK cells receptor NCR3 and stimulates NK cells cytotoxicity. It may thereby trigger NK cells cytotoxicity against neighboring tumor cells and immature myeloid dendritic cells (DC). In terms of biological role, may mediate ricin-induced apoptosis. The polypeptide is Large proline-rich protein BAG6 (Sus scrofa (Pig)).